A 500-amino-acid polypeptide reads, in one-letter code: Cysteine--tRNA ligase (500 aa).

Position 29 (C29) interacts with Zn(2+). Residues 31-41 (VTVYDLCHLGH) carry the 'HIGH' region motif. Residues C213, H238, and E242 each contribute to the Zn(2+) site. A 'KMSKS' region motif is present at residues 270 to 274 (KMSKS). ATP is bound at residue K273.

Belongs to the class-I aminoacyl-tRNA synthetase family. In terms of assembly, monomer. Requires Zn(2+) as cofactor.

The protein localises to the cytoplasm. The catalysed reaction is tRNA(Cys) + L-cysteine + ATP = L-cysteinyl-tRNA(Cys) + AMP + diphosphate. This is Cysteine--tRNA ligase from Prochlorococcus marinus (strain NATL2A).